The following is a 464-amino-acid chain: Cysteine--tRNA ligase (464 aa).

Position 29 (cysteine 29) interacts with Zn(2+). Residues 31-41 (PTVYDFAHIGN) carry the 'HIGH' region motif. Residues cysteine 224, histidine 249, and glutamate 253 each coordinate Zn(2+). The 'KMSKS' region signature appears at 282 to 286 (KMSKS). Lysine 285 provides a ligand contact to ATP.

It belongs to the class-I aminoacyl-tRNA synthetase family. Monomer. The cofactor is Zn(2+).

Its subcellular location is the cytoplasm. The catalysed reaction is tRNA(Cys) + L-cysteine + ATP = L-cysteinyl-tRNA(Cys) + AMP + diphosphate. This is Cysteine--tRNA ligase from Afipia carboxidovorans (strain ATCC 49405 / DSM 1227 / KCTC 32145 / OM5) (Oligotropha carboxidovorans).